A 428-amino-acid chain; its full sequence is Glutamate-1-semialdehyde 2,1-aminomutase (428 aa).

An N6-(pyridoxal phosphate)lysine modification is found at Lys267.

This sequence belongs to the class-III pyridoxal-phosphate-dependent aminotransferase family. HemL subfamily. In terms of assembly, homodimer. Pyridoxal 5'-phosphate is required as a cofactor.

The protein resides in the cytoplasm. It carries out the reaction (S)-4-amino-5-oxopentanoate = 5-aminolevulinate. Its pathway is porphyrin-containing compound metabolism; protoporphyrin-IX biosynthesis; 5-aminolevulinate from L-glutamyl-tRNA(Glu): step 2/2. This chain is Glutamate-1-semialdehyde 2,1-aminomutase, found in Persephonella marina (strain DSM 14350 / EX-H1).